The sequence spans 873 residues: MQDKYLPSAVEQAAQQHWQAIDAYRVPEHATGPDGKEKPKFYACSMLPYPSGKLHMGHVRNYTINDVMARYLRMNGNNVLMPMGWDAFGMPAENAALNNGVAPAAWTYDNIAYMKKQMQSMGLAIDWSREVATCSPDYYRWNQWLFLKMLEKGIAYRKTGTVNWDPVDQTVLANEQVIDGRGWRSGAIVEKREIPMYYLRITDYAEELLGDLDGLGWPERVKIMQQNWIGKSVGVRFAFKHDIEGDDGQLINDGKLYVFTTRADTIMGVTFCAVAAEHPLATHAAANNPELAAFIDECKHGSVMEADMATMEKKGMPTGLQVTHPLTGEQVDVWVGNYVLMSYGDGAVMGVPAHDERDFAFANKYKLPIRQVIDVKGQPYSTEAWQEWYGDKENGVCIESGKYNGLGYLAAVEAIAADLGAMGLGEKKITWRLRDWGISRQRYWGTPIPLIHCDSCGVVPVPEQDLPVVLPEDLVPDGTGNPLNKDPRFLQCSCPSCGKPARRETDTMDTFIDSCWYYMRYTCPDAATMVDARNDYWMPMDQYIGGIEHAILHLLYARFWTKVMRDLGLVKFDEPFTNLLTQGMVLNETFYREDAAGKKTWYNPADVDVQTDDRGRPVGATLKADGQPVVIGGVEKMSKSKNNGIDPQALIDQHGADTARLFVMFAAPPEQQLEWSGSGVEGASRFLRRVWNYGFANAAAVRDGAGAAPTADDADLRREIHGVLKQANYDYQRIQYNTVVSATMKMLNALEDAKNASPVARRECFGILLRVLYPVVPHITHGLWDALGYATQYGDLLDAPWPQVDEGALVRTEIEMVLQINGKVRGSVTVPADADRAAIETAAAASETVAKFAEGKAPKKIVVVPGRLVNVVL.

The short motif at 48–58 is the 'HIGH' region element; sequence PYPSGKLHMGH. The 'KMSKS' region signature appears at 636 to 640; that stretch reads KMSKS. Lys-639 serves as a coordination point for ATP.

It belongs to the class-I aminoacyl-tRNA synthetase family.

The protein localises to the cytoplasm. The catalysed reaction is tRNA(Leu) + L-leucine + ATP = L-leucyl-tRNA(Leu) + AMP + diphosphate. The polypeptide is Leucine--tRNA ligase (Cupriavidus pinatubonensis (strain JMP 134 / LMG 1197) (Cupriavidus necator (strain JMP 134))).